Reading from the N-terminus, the 475-residue chain is Aspartyl/glutamyl-tRNA(Asn/Gln) amidotransferase subunit B (475 aa).

Belongs to the GatB/GatE family. GatB subfamily. Heterotrimer of A, B and C subunits.

The enzyme catalyses L-glutamyl-tRNA(Gln) + L-glutamine + ATP + H2O = L-glutaminyl-tRNA(Gln) + L-glutamate + ADP + phosphate + H(+). The catalysed reaction is L-aspartyl-tRNA(Asn) + L-glutamine + ATP + H2O = L-asparaginyl-tRNA(Asn) + L-glutamate + ADP + phosphate + 2 H(+). In terms of biological role, allows the formation of correctly charged Asn-tRNA(Asn) or Gln-tRNA(Gln) through the transamidation of misacylated Asp-tRNA(Asn) or Glu-tRNA(Gln) in organisms which lack either or both of asparaginyl-tRNA or glutaminyl-tRNA synthetases. The reaction takes place in the presence of glutamine and ATP through an activated phospho-Asp-tRNA(Asn) or phospho-Glu-tRNA(Gln). In Mycoplasma mobile (strain ATCC 43663 / 163K / NCTC 11711) (Mesomycoplasma mobile), this protein is Aspartyl/glutamyl-tRNA(Asn/Gln) amidotransferase subunit B.